The chain runs to 877 residues: DNA repair protein rad16 (877 aa).

Ser-71 is subject to Phosphoserine; by CK2. The tract at residues 440–490 (SKSIKKPEPSKEREASNTTSRKGVPPSKRRRVRGGNNATSRTTSDNTDAND) is disordered. Positions 444–454 (KKPEPSKEREA) are enriched in basic and acidic residues. Polar residues predominate over residues 475 to 490 (NNATSRTTSDNTDAND). Residues 652 to 732 (RVIVDLREFR…IPVLLIEFEQ (81 aa)) enclose the ERCC4 domain.

The protein belongs to the XPF family. Heterodimer composed of rad16 and swi10.

The protein resides in the nucleus. It localises to the cytoplasm. Its subcellular location is the cytoskeleton. The protein localises to the microtubule organizing center. It is found in the spindle pole body. Its function is as follows. Endonuclease that specifically degrades single-stranded DNA and which is involved in nucleotide excision repair of DNA damaged with UV light, bulky adducts, or cross-linking agents. Required for double strand break-induced interchromosomal gene conversion. This is DNA repair protein rad16 (rad16) from Schizosaccharomyces pombe (strain 972 / ATCC 24843) (Fission yeast).